The following is a 383-amino-acid chain: Cobalt-precorrin-5B C(1)-methyltransferase (383 aa).

The segment at 1-24 (MQPSARRPFDLATPAPNGLRRGRT) is disordered.

Belongs to the CbiD family.

The catalysed reaction is Co-precorrin-5B + S-adenosyl-L-methionine = Co-precorrin-6A + S-adenosyl-L-homocysteine. The protein operates within cofactor biosynthesis; adenosylcobalamin biosynthesis; cob(II)yrinate a,c-diamide from sirohydrochlorin (anaerobic route): step 6/10. Catalyzes the methylation of C-1 in cobalt-precorrin-5B to form cobalt-precorrin-6A. The protein is Cobalt-precorrin-5B C(1)-methyltransferase of Ralstonia nicotianae (strain ATCC BAA-1114 / GMI1000) (Ralstonia solanacearum).